The chain runs to 46 residues: Homeobox protein Hox-D4 (46 aa).

The segment at residues 1–46 (VNSNYTGGEPKRSRTAYTRQQVLELEKEFLFNRYLTRRRRIQHTLT) is a DNA-binding region (homeobox).

It belongs to the Antp homeobox family. Deformed subfamily. Forms a DNA-binding heterodimer with transcription factor PBX1.

It localises to the nucleus. Its function is as follows. Sequence-specific transcription factor which is part of a developmental regulatory system that provides cells with specific positional identities on the anterior-posterior axis. This Ovis aries (Sheep) protein is Homeobox protein Hox-D4 (HOXD4).